We begin with the raw amino-acid sequence, 267 residues long: Ubiquinone biosynthesis protein COQ4, mitochondrial (267 aa).

A mitochondrion-targeting transit peptide spans 1–17; it reads MSRLKIPSQLLRGGRGF. Residues His153, Asp154, His157, and Glu169 each contribute to the Zn(2+) site.

This sequence belongs to the COQ4 family. In terms of assembly, component of a multi-subunit COQ enzyme complex, composed of at least COQ3, COQ4, COQ5, COQ6, COQ7 and COQ9. It depends on Zn(2+) as a cofactor.

The protein resides in the mitochondrion inner membrane. The enzyme catalyses a 4-hydroxy-3-methoxy-5-(all-trans-polyprenyl)benzoate + H(+) = a 2-methoxy-6-(all-trans-polyprenyl)phenol + CO2. It participates in cofactor biosynthesis; ubiquinone biosynthesis. Its function is as follows. Lyase that catalyzes the C1-decarboxylation of 4-hydroxy-3-methoxy-5-(all-trans-polyprenyl)benzoic acid into 2-methoxy-6-(all-trans-polyprenyl)phenol during ubiquinone biosynthesis. The polypeptide is Ubiquinone biosynthesis protein COQ4, mitochondrial (Arthroderma otae (strain ATCC MYA-4605 / CBS 113480) (Microsporum canis)).